A 314-amino-acid chain; its full sequence is Peroxisome biogenesis factor 10 (314 aa).

The Peroxisomal matrix portion of the chain corresponds to Met1 to Glu7. The chain crosses the membrane as a helical span at residues Ile8–Leu37. Position 38 (Gly38) is a topological domain, cytoplasmic. Residues Gln39–Ser60 traverse the membrane as a helical segment. At Thr61–Pro90 the chain is on the peroxisomal matrix side. A helical transmembrane segment spans residues Ser91 to Ile110. The Cytoplasmic portion of the chain corresponds to Gln111–Asp142. A helical membrane pass occupies residues Val143–Thr166. Residues Gly167–Arg197 lie on the Peroxisomal matrix side of the membrane. Residues Phe198–Phe218 traverse the membrane as a helical segment. The Cytoplasmic portion of the chain corresponds to Leu219–Leu314. Zn(2+) contacts are provided by Cys255, Cys258, Cys269, His271, Cys274, Cys277, Cys296, and Cys299. The segment at Cys255–Arg300 adopts an RING-type zinc-finger fold.

This sequence belongs to the pex2/pex10/pex12 family. Component of the PEX2-PEX10-PEX12 retrotranslocation channel.

The protein localises to the peroxisome membrane. It carries out the reaction S-ubiquitinyl-[E2 ubiquitin-conjugating enzyme]-L-cysteine + [acceptor protein]-L-lysine = [E2 ubiquitin-conjugating enzyme]-L-cysteine + N(6)-ubiquitinyl-[acceptor protein]-L-lysine.. The protein operates within protein modification; protein ubiquitination. Its activity is regulated as follows. The E3 ubiquitin-protein ligase activity is stimulated by PEX12/prx-12. Its function is as follows. E3 ubiquitin-protein ligase component of a retrotranslocation channel required for peroxisome organization by mediating export of the PEX5/prx-5 receptor from peroxisomes to the cytosol, thereby promoting PEX5/prx-5 recycling. The retrotranslocation channel is composed of PEX2/prx-2, PEX10/prx-10 and PEX12/prx-12; each subunit contributing transmembrane segments that coassemble into an open channel that specifically allows the passage of PEX5/prx-5 through the peroxisomal membrane. PEX10/prx-10 also regulates PEX5 recycling by acting as a E3 ubiquitin-protein ligase. When PEX5/prx-5 recycling is compromised, PEX10/prx-10 catalyzes polyubiquitination of PEX5/prx-5 during its passage through the retrotranslocation channel, leading to its degradation. In Caenorhabditis elegans, this protein is Peroxisome biogenesis factor 10.